Reading from the N-terminus, the 126-residue chain is CD59 glycoprotein (126 aa).

Residues 1-25 (MGIQGGSVLFGLLLALAVFCHSGHS) form the signal peptide. The 81-residue stretch at 26–106 (LQCYNCPNPT…QLENGGTSLS (81 aa)) folds into the UPAR/Ly6 domain. Disulfide bonds link Cys28–Cys51, Cys31–Cys38, Cys44–Cys64, Cys70–Cys88, and Cys89–Cys94. Asn43 carries N-linked (GlcNAc...) asparagine glycosylation. Asn100 carries the GPI-anchor amidated asparagine lipid modification. Residues 101–126 (GGTSLSEKTVLLLVTPLLAAAWCLHP) constitute a propeptide, removed in mature form.

Interacts with T-cell surface antigen CD2. Post-translationally, N- and O-glycosylated.

The protein resides in the cell membrane. It localises to the secreted. Potent inhibitor of the complement membrane attack complex (MAC) action, which protects self-cells from damage during complement activation. Acts by binding to the beta-haipins of C8 (C8A and C8B) components of the assembling MAC, forming an intermolecular beta-sheet that prevents incorporation of the multiple copies of C9 required for complete formation of the osmolytic pore. This chain is CD59 glycoprotein, found in Papio sp. (Baboon).